A 216-amino-acid chain; its full sequence is Large ribosomal subunit protein uL24m (216 aa).

The transit peptide at 1 to 9 (MRLTLLLEM) directs the protein to the mitochondrion. A KOW domain is found at 56 to 89 (YFRGDTVEVLHGKDAGKQGKVTQVVRARNWVVVD).

Belongs to the universal ribosomal protein uL24 family. Component of the mitochondrial ribosome large subunit (39S) which comprises a 16S rRNA and about 50 distinct proteins. Ubiquitous. Expressed at greater levels in the kidney, adipose tissue, muscle and liver than the brain, heart, ovary and lung.

It is found in the mitochondrion. The chain is Large ribosomal subunit protein uL24m (mrpl24) from Xenopus laevis (African clawed frog).